Reading from the N-terminus, the 393-residue chain is Putative F-box/kelch-repeat protein At1g32430 (393 aa).

An F-box domain is found at 1-47; sequence MANKEKLPWDLEEEILSRVPPTSLDRFKTVCKRWNALFNDKTFINNH. Kelch repeat units lie at residues 151 to 199 and 308 to 357; these read YMKD…NLSV and WIYV…QVQF.

This is Putative F-box/kelch-repeat protein At1g32430 from Arabidopsis thaliana (Mouse-ear cress).